Reading from the N-terminus, the 360-residue chain is MLYALATGLSAIFTPLNALTYLTSRIILGALTALLLSIFCGGKMIRYLQKMQMGQFVRDDGPKTHLKKAGTPTMGGALIIFSITVSMLCWADLRSVYTWLALFVLLGFGAVGWTDDYLKLVKKNTKGLAAKQKYAYLSLVALLTALWLYFLADTPIETTLIMPFFKHFEWQMGILFIPFVYLVLTGASNAVNLTDGLDGLAIMPVVLVSGGLCIFAYLSGSANFALYLHIPAIAGAGEMAIFCAAIAGAGLGFLWYNAHPALVFMGDVGALSLGAALATVAVVVRQELAFAVMGGVFVAEALSVMIQVGSYKCRGKRVFRMAPLHHHFELGGWPESRVTIRFWIITVVLVLVGLSTLKLR.

Helical transmembrane passes span 19 to 39, 73 to 93, 95 to 115, 136 to 156, 173 to 193, 199 to 219, 233 to 253, 263 to 283, 288 to 308, and 338 to 358; these read LTYL…LSIF, TMGG…WADL, SVYT…GWTD, YLSL…DTPI, GILF…AVNL, GLAI…AYLS, IAGA…GLGF, VFMG…VAVV, LAFA…MIQV, and VTIR…STLK.

Belongs to the glycosyltransferase 4 family. MraY subfamily. The cofactor is Mg(2+).

The protein localises to the cell inner membrane. The enzyme catalyses UDP-N-acetyl-alpha-D-muramoyl-L-alanyl-gamma-D-glutamyl-meso-2,6-diaminopimeloyl-D-alanyl-D-alanine + di-trans,octa-cis-undecaprenyl phosphate = di-trans,octa-cis-undecaprenyl diphospho-N-acetyl-alpha-D-muramoyl-L-alanyl-D-glutamyl-meso-2,6-diaminopimeloyl-D-alanyl-D-alanine + UMP. It participates in cell wall biogenesis; peptidoglycan biosynthesis. In terms of biological role, catalyzes the initial step of the lipid cycle reactions in the biosynthesis of the cell wall peptidoglycan: transfers peptidoglycan precursor phospho-MurNAc-pentapeptide from UDP-MurNAc-pentapeptide onto the lipid carrier undecaprenyl phosphate, yielding undecaprenyl-pyrophosphoryl-MurNAc-pentapeptide, known as lipid I. The chain is Phospho-N-acetylmuramoyl-pentapeptide-transferase from Dichelobacter nodosus (strain VCS1703A).